The sequence spans 313 residues: Ribosomal RNA small subunit methyltransferase H (313 aa).

S-adenosyl-L-methionine-binding positions include 35–37, D55, F80, D102, and Q109; that span reads GGH.

The protein belongs to the methyltransferase superfamily. RsmH family.

It is found in the cytoplasm. The enzyme catalyses cytidine(1402) in 16S rRNA + S-adenosyl-L-methionine = N(4)-methylcytidine(1402) in 16S rRNA + S-adenosyl-L-homocysteine + H(+). Its function is as follows. Specifically methylates the N4 position of cytidine in position 1402 (C1402) of 16S rRNA. In Shewanella loihica (strain ATCC BAA-1088 / PV-4), this protein is Ribosomal RNA small subunit methyltransferase H.